A 309-amino-acid chain; its full sequence is HPr kinase/phosphorylase (309 aa).

Catalysis depends on residues H138 and K159. An ATP-binding site is contributed by G153–S160. S160 provides a ligand contact to Mg(2+). D177 serves as the catalytic Proton acceptor; for phosphorylation activity. Proton donor; for dephosphorylation activity. The tract at residues L201–N210 is important for the catalytic mechanism of both phosphorylation and dephosphorylation. Residue E202 coordinates Mg(2+). Residue R243 is part of the active site. The tract at residues P264–R269 is important for the catalytic mechanism of dephosphorylation.

The protein belongs to the HPrK/P family. As to quaternary structure, homohexamer. The cofactor is Mg(2+).

The catalysed reaction is [HPr protein]-L-serine + ATP = [HPr protein]-O-phospho-L-serine + ADP + H(+). It carries out the reaction [HPr protein]-O-phospho-L-serine + phosphate + H(+) = [HPr protein]-L-serine + diphosphate. Functionally, catalyzes the ATP- as well as the pyrophosphate-dependent phosphorylation of a specific serine residue in HPr, a phosphocarrier protein of the phosphoenolpyruvate-dependent sugar phosphotransferase system (PTS). HprK/P also catalyzes the pyrophosphate-producing, inorganic phosphate-dependent dephosphorylation (phosphorolysis) of seryl-phosphorylated HPr (P-Ser-HPr). The two antagonistic activities of HprK/P are regulated by several intracellular metabolites, which change their concentration in response to the absence or presence of rapidly metabolisable carbon sources (glucose, fructose, etc.) in the growth medium. Also phosphorylates/dephosphorylates the HPr-like catabolite repression protein crh on a specific serine residue. Therefore, by controlling the phosphorylation state of HPr and crh, HPrK/P is a sensor enzyme that plays a major role in the regulation of carbon metabolism and sugar transport: it mediates carbon catabolite repression (CCR), and regulates PTS-catalyzed carbohydrate uptake and inducer exclusion. This chain is HPr kinase/phosphorylase, found in Bacillus cereus (strain G9842).